Reading from the N-terminus, the 206-residue chain is Ras-related protein Rab7 (206 aa).

GTP contacts are provided by residues 15–22, 63–67, and 125–128; these read GDSGVGKT, DTAGQ, and NKID. Residues cysteine 204 and cysteine 206 are each lipidated (S-geranylgeranyl cysteine). Position 206 is a cysteine methyl ester (cysteine 206).

It belongs to the small GTPase superfamily. Rab family.

The protein localises to the cell membrane. Its function is as follows. Protein transport. Probably involved in vesicular traffic. The sequence is that of Ras-related protein Rab7 from Pisum sativum (Garden pea).